The following is a 432-amino-acid chain: MKVNLDYLGRLFTENELTEEERQLAEKLPAMRKEKGKLFCQRCNSTILEEWYLPIGAYYCRECLLMKRVRSDQTLYYFPQEDFPKQDVLKWRGQLTPFQEKVSEGLLQAVDKQKPTLVHAVTGAGKTEMIYQVVAKVINAGGAVCLASPRIDVCLELYKRLQQDFSCGIALLHGESEPYFRTPLVVATTHQLLKFYQAFDLLIVDEVDAFPYVDNPMLYHAVKNSVKENGLRIFLTATSTNELDKKVRLGELKRLNLPRRFHGNPLIIPKPIWLSDFNRYLDKNRLSPKLKSYIEKQRKTAYPLLIFASEIKKGEQLAEILQEQFPNEKIGFVSSVTEDRLEQVQAFRDGELTILISTTILERGVTFPCVDVFVVEANHRLFTKSSLIQIGGRVGRSMDRPTGDLLFFHDGLNASIKKAIKEIQMMNKEAGL.

Positions 40, 43, 60, and 63 each coordinate Zn(2+). A Helicase ATP-binding domain is found at 107–257; that stretch reads LQAVDKQKPT…RLGELKRLNL (151 aa). ATP is bound at residue 120–127; it reads AVTGAGKT. The DEAD box motif lies at 205–208; the sequence is DEVD. One can recognise a Helicase C-terminal domain in the interval 289–432; it reads KLKSYIEKQR…IQMMNKEAGL (144 aa).

This sequence belongs to the DEAD box helicase family. As to quaternary structure, monomer and dimer in solution. Interacts with DprA and ComFC; ComFA-ComFC form rings about 150 Angstroms in diameter with apparent 6-fold symmetry. It depends on Zn(2+) as a cofactor.

Its subcellular location is the cytoplasm. Its function is as follows. Involved in transformation (genetic competence for DNA uptake). DNA uptake is energy dependent, this protein may provide the driving force for DNA uptake. Does not have helicase activity, translocates on single-stranded (ss)DNA in a 5'-3' direction in an ATP-dependent manner, but does not unwind double-stranded (ds)DNA (tested with 5'- and 3'-overhang dsDNA). ATP hydrolysis causes the release of ssDNA from ComFA. A ssDNA-stimulated ATPase; dsDNA does not stimulate ATPase. ATP hydrolysis causes the release of ssDNA from ComFA. ComFC has no effect on ATPase activity. Binds ssDNA but only very poorly to dsDNA in the absence of ATP. Binding to ssDNA does not require free DNA ends. This is Competence protein ComFA from Streptococcus pneumoniae (strain ATCC BAA-255 / R6).